A 558-amino-acid chain; its full sequence is Arginine--tRNA ligase (558 aa).

The 'HIGH' region motif lies at 116–126; sequence ANPNGPLHVGH.

Belongs to the class-I aminoacyl-tRNA synthetase family.

It is found in the cytoplasm. It catalyses the reaction tRNA(Arg) + L-arginine + ATP = L-arginyl-tRNA(Arg) + AMP + diphosphate. This is Arginine--tRNA ligase from Methanocorpusculum labreanum (strain ATCC 43576 / DSM 4855 / Z).